A 513-amino-acid chain; its full sequence is Microtubule-associated protein 70-5 (513 aa).

Disordered regions lie at residues 1-20 (MTAAENPFVSDTSSLQSQLK), 60-81 (KLGATENQVDQKELERKKLEEE), 347-367 (FLTSGGGSKKRSSSQLRGSVT), and 393-413 (ANGLTDQHEEDSERKTEEDGN). Polar residues predominate over residues 9 to 18 (VSDTSSLQSQ). Residues 10–322 (SDTSSLQSQL…LKLRLKTIED (313 aa)) adopt a coiled-coil conformation. A compositionally biased stretch (basic and acidic residues) spans 60–80 (KLGATENQVDQKELERKKLEE). Residues 190–400 (FLEKINRQKV…ITANGLTDQH (211 aa)) are required for targeting to microtubules. The stretch at 426–501 (DRLQKEVIAL…EESKLCRKAK (76 aa)) forms a coiled coil.

This sequence belongs to the MAP70 family. Interacts with MAP70.1 and itself.

Its subcellular location is the cytoplasm. It is found in the cytoskeleton. Functionally, plant-specific protein that interact with microtubules and regulates microtubule dynamics. May play a role in anisotropic cell expansion and organ growth. In association with MAP70.1, is essential for the normal banding pattern of secondary cell wall and for the proper development of xylem tracheary elements and wood formation. This Arabidopsis thaliana (Mouse-ear cress) protein is Microtubule-associated protein 70-5 (MAP70.5).